We begin with the raw amino-acid sequence, 299 residues long: Large ribosomal subunit protein eL22 (299 aa).

2 disordered regions span residues 1-142 (MAPT…AAPA) and 155-178 (VAKP…KKNV). Basic and acidic residues-rich tracts occupy residues 33–42 (GKVEKPKAEA) and 55–64 (KASEAAKDVK). 2 stretches are compositionally biased toward low complexity: residues 65–98 (AAAA…AAAA) and 105–142 (AAAA…AAPA).

This sequence belongs to the eukaryotic ribosomal protein eL22 family.

In Drosophila melanogaster (Fruit fly), this protein is Large ribosomal subunit protein eL22 (RpL22).